A 1342-amino-acid polypeptide reads, in one-letter code: DNA-directed RNA polymerase subunit beta (1342 aa).

Belongs to the RNA polymerase beta chain family. As to quaternary structure, the RNAP catalytic core consists of 2 alpha, 1 beta, 1 beta' and 1 omega subunit. When a sigma factor is associated with the core the holoenzyme is formed, which can initiate transcription.

The catalysed reaction is RNA(n) + a ribonucleoside 5'-triphosphate = RNA(n+1) + diphosphate. In terms of biological role, DNA-dependent RNA polymerase catalyzes the transcription of DNA into RNA using the four ribonucleoside triphosphates as substrates. This Enterobacter sp. (strain 638) protein is DNA-directed RNA polymerase subunit beta.